Consider the following 253-residue polypeptide: Major prion protein (253 aa).

Positions Met-1–Cys-22 are cleaved as a signal peptide. The segment at Lys-23–Tyr-38 is interaction with ADGRG6. Residues Lys-23–Ser-230 are interaction with GRB2, ERI3 and SYN1. The interval Pro-26–Ser-108 is disordered. A run of 5 repeats spans residues Pro-51–Gln-59, Pro-60–Gln-67, Pro-68–Gln-75, Pro-76–Gln-83, and Pro-84–Gln-91. Residues Pro-51–Gln-91 are 5 X 8 AA tandem repeats of P-H-G-G-G-W-G-Q. The span at Gln-52–Thr-95 shows a compositional bias: gly residues. The Cu(2+) site is built by His-61, Gly-62, Gly-63, His-69, Gly-70, Gly-71, His-77, Gly-78, Gly-79, His-85, Gly-86, and Gly-87. Cys-179 and Cys-214 are oxidised to a cystine. Asn-181 and Asn-197 each carry an N-linked (GlcNAc...) asparagine glycan. A lipid anchor (GPI-anchor amidated serine) is attached at Ser-230. The propeptide at Ser-231–Gly-253 is removed in mature form.

This sequence belongs to the prion family. As to quaternary structure, monomer and homodimer. Has a tendency to aggregate into amyloid fibrils containing a cross-beta spine, formed by a steric zipper of superposed beta-strands. Soluble oligomers may represent an intermediate stage on the path to fibril formation. Copper binding may promote oligomerization. Interacts with GRB2, APP, ERI3/PRNPIP and SYN1. Mislocalized cytosolically exposed PrP interacts with MGRN1; this interaction alters MGRN1 subcellular location and causes lysosomal enlargement. Interacts with APP. Interacts with KIAA1191. Interacts with ADGRG6.

The protein resides in the cell membrane. Its subcellular location is the golgi apparatus. Functionally, its primary physiological function is unclear. May play a role in neuronal development and synaptic plasticity. May be required for neuronal myelin sheath maintenance. May promote myelin homeostasis through acting as an agonist for ADGRG6 receptor. May play a role in iron uptake and iron homeostasis. Soluble oligomers are toxic to cultured neuroblastoma cells and induce apoptosis (in vitro). Association with GPC1 (via its heparan sulfate chains) targets PRNP to lipid rafts. Also provides Cu(2+) or Zn(2+) for the ascorbate-mediated GPC1 deaminase degradation of its heparan sulfate side chains. The sequence is that of Major prion protein (PRNP) from Colobus guereza (Mantled guereza).